Consider the following 71-residue polypeptide: uncharacterized protein (71 aa).

The first 19 residues, 1–19 (MFLFPSLLSSFCITLRSIS), serve as a signal peptide directing secretion.

This is an uncharacterized protein from Pasteurella multocida (strain Pm70).